The chain runs to 301 residues: Epimerase family protein Mb2239 (301 aa).

This sequence belongs to the NAD(P)-dependent epimerase/dehydratase family. SDR39U1 subfamily.

This chain is Epimerase family protein Mb2239, found in Mycobacterium bovis (strain ATCC BAA-935 / AF2122/97).